Reading from the N-terminus, the 356-residue chain is DNA-directed RNA polymerase subunit alpha (356 aa).

Residues 1–259 (MIKAAATLKS…KLMTACLTTL (259 aa)) are alpha N-terminal domain (alpha-NTD). Positions 277 to 356 (FVQVNYNKME…STYGIELKED (80 aa)) are alpha C-terminal domain (alpha-CTD).

The protein belongs to the RNA polymerase alpha chain family. As to quaternary structure, in plastids the minimal PEP RNA polymerase catalytic core is composed of four subunits: alpha, beta, beta', and beta''. When a (nuclear-encoded) sigma factor is associated with the core the holoenzyme is formed, which can initiate transcription.

The protein localises to the plastid. It localises to the chloroplast. The catalysed reaction is RNA(n) + a ribonucleoside 5'-triphosphate = RNA(n+1) + diphosphate. Functionally, DNA-dependent RNA polymerase catalyzes the transcription of DNA into RNA using the four ribonucleoside triphosphates as substrates. The polypeptide is DNA-directed RNA polymerase subunit alpha (Ostreococcus tauri).